A 118-amino-acid polypeptide reads, in one-letter code: Putative pterin-4-alpha-carbinolamine dehydratase (118 aa).

The protein belongs to the pterin-4-alpha-carbinolamine dehydratase family.

It catalyses the reaction (4aS,6R)-4a-hydroxy-L-erythro-5,6,7,8-tetrahydrobiopterin = (6R)-L-erythro-6,7-dihydrobiopterin + H2O. The chain is Putative pterin-4-alpha-carbinolamine dehydratase from Xanthomonas campestris pv. campestris (strain 8004).